A 232-amino-acid polypeptide reads, in one-letter code: Large ribosomal subunit protein uL1 (232 aa).

This sequence belongs to the universal ribosomal protein uL1 family. Part of the 50S ribosomal subunit.

In terms of biological role, binds directly to 23S rRNA. The L1 stalk is quite mobile in the ribosome, and is involved in E site tRNA release. Protein L1 is also a translational repressor protein, it controls the translation of the L11 operon by binding to its mRNA. The protein is Large ribosomal subunit protein uL1 of Thermosipho africanus (strain TCF52B).